Here is a 743-residue protein sequence, read N- to C-terminus: Probable TonB-dependent receptor BfrD (743 aa).

A signal peptide spans 1 to 30; the sequence is MKFYSSHPMPESLAAAIAVPLLGLLPAAQA. Positions 62–168 constitute a TBDR plug domain; it reads PLADTPRTVQ…AGGSINLVTK (107 aa). The region spanning 173-743 is the TBDR beta-barrel domain; it reads QDFTEVQAGI…SAMLTFKLSY (571 aa). A TonB C-terminal box motif is present at residues 726–743; sequence YAALGPGRSAMLTFKLSY.

Belongs to the TonB-dependent receptor family.

The protein resides in the cell outer membrane. In terms of biological role, probably involved in iron transport. The chain is Probable TonB-dependent receptor BfrD (bfrD) from Bordetella pertussis (strain Tohama I / ATCC BAA-589 / NCTC 13251).